The following is an 82-amino-acid chain: ATP synthase subunit c (82 aa).

The next 2 membrane-spanning stretches (helical) occupy residues 7–27 and 53–73; these read FVAL…CIGI and FLLA…AMMF.

The protein belongs to the ATPase C chain family. As to quaternary structure, F-type ATPases have 2 components, F(1) - the catalytic core - and F(0) - the membrane proton channel. F(1) has five subunits: alpha(3), beta(3), gamma(1), delta(1), epsilon(1). F(0) has three main subunits: a(1), b(2) and c(10-14). The alpha and beta chains form an alternating ring which encloses part of the gamma chain. F(1) is attached to F(0) by a central stalk formed by the gamma and epsilon chains, while a peripheral stalk is formed by the delta and b chains.

The protein localises to the cell inner membrane. F(1)F(0) ATP synthase produces ATP from ADP in the presence of a proton or sodium gradient. F-type ATPases consist of two structural domains, F(1) containing the extramembraneous catalytic core and F(0) containing the membrane proton channel, linked together by a central stalk and a peripheral stalk. During catalysis, ATP synthesis in the catalytic domain of F(1) is coupled via a rotary mechanism of the central stalk subunits to proton translocation. Its function is as follows. Key component of the F(0) channel; it plays a direct role in translocation across the membrane. A homomeric c-ring of between 10-14 subunits forms the central stalk rotor element with the F(1) delta and epsilon subunits. The protein is ATP synthase subunit c of Aromatoleum aromaticum (strain DSM 19018 / LMG 30748 / EbN1) (Azoarcus sp. (strain EbN1)).